The sequence spans 225 residues: UPF0758 protein NMB1038 (225 aa).

Residues 102-224 enclose the MPN domain; the sequence is VLSDPDTVAD…VCSFRQLGLM (123 aa). Positions 173, 175, and 186 each coordinate Zn(2+). Residues 173–186 carry the JAMM motif motif; that stretch reads HNHPGGSPEPSQED.

This sequence belongs to the UPF0758 family.

This is UPF0758 protein NMB1038 from Neisseria meningitidis serogroup B (strain ATCC BAA-335 / MC58).